Consider the following 666-residue polypeptide: ATP synthase subunit alpha 2 (666 aa).

182–189 provides a ligand contact to ATP; it reads GDRATGKT. Positions 527-666 are disordered; the sequence is MPAEDAAGDI…DAEAEARHKR (140 aa). The span at 545 to 590 shows a compositional bias: basic and acidic residues; that stretch reads ARGDADRDADHGANREVSREVSPEASREVSREVSCEVSHEADRDAA. Residues 591-601 show a composition bias toward low complexity; the sequence is ADAARVAGRAP. Positions 623-641 are enriched in basic and acidic residues; the sequence is ADGDRASASRPRPDARGDA.

This sequence belongs to the ATPase alpha/beta chains family. As to quaternary structure, F-type ATPases have 2 components, CF(1) - the catalytic core - and CF(0) - the membrane proton channel. CF(1) has five subunits: alpha(3), beta(3), gamma(1), delta(1), epsilon(1). CF(0) has three main subunits: a(1), b(2) and c(9-12). The alpha and beta chains form an alternating ring which encloses part of the gamma chain. CF(1) is attached to CF(0) by a central stalk formed by the gamma and epsilon chains, while a peripheral stalk is formed by the delta and b chains.

The protein localises to the cell inner membrane. It carries out the reaction ATP + H2O + 4 H(+)(in) = ADP + phosphate + 5 H(+)(out). Functionally, produces ATP from ADP in the presence of a proton gradient across the membrane. The alpha chain is a regulatory subunit. This chain is ATP synthase subunit alpha 2, found in Burkholderia pseudomallei (strain K96243).